A 679-amino-acid chain; its full sequence is Protein hook (679 aa).

An interaction with microtubules region spans residues 1-155; that stretch reads MSAPKNEMYY…NIMRALQELE (155 aa). The Calponin-homology (CH) domain occupies 6–123; sequence NEMYYSLLEW…RLLQLVLGCA (118 aa). Coiled coils occupy residues 135-437 and 480-574; these read EIMC…LKCG and QTAL…QEIL.

The protein belongs to the hook family. As to quaternary structure, homodimer. Interacts with microtubules via its N-terminus.

The protein resides in the cytoplasm. It localises to the cytoskeleton. It is found in the endosome. Its subcellular location is the synapse. Involved in endocytic trafficking by stabilizing organelles of the endocytic pathway. Probably acts as a cytoskeletal linker protein required to tether endosome vesicles to the cytoskeleton. Involved in modulation of endocytosis at stages required for down-regulation of membrane proteins that control synapse size. Not involved in synaptic vesicle recycling. Required in R7 cells for boss endocytosis into multivesicular bodies (MVBs). Has a role in regulating adult longevity. The chain is Protein hook from Drosophila melanogaster (Fruit fly).